The chain runs to 261 residues: Hydroxyethylthiazole kinase (261 aa).

Residue methionine 39 coordinates substrate. 2 residues coordinate ATP: arginine 115 and threonine 159. Glycine 186 provides a ligand contact to substrate.

Belongs to the Thz kinase family. It depends on Mg(2+) as a cofactor.

It catalyses the reaction 5-(2-hydroxyethyl)-4-methylthiazole + ATP = 4-methyl-5-(2-phosphooxyethyl)-thiazole + ADP + H(+). The protein operates within cofactor biosynthesis; thiamine diphosphate biosynthesis; 4-methyl-5-(2-phosphoethyl)-thiazole from 5-(2-hydroxyethyl)-4-methylthiazole: step 1/1. In terms of biological role, catalyzes the phosphorylation of the hydroxyl group of 4-methyl-5-beta-hydroxyethylthiazole (THZ). The sequence is that of Hydroxyethylthiazole kinase from Macrococcus caseolyticus (strain JCSC5402) (Macrococcoides caseolyticum).